Here is a 397-residue protein sequence, read N- to C-terminus: Formate-dependent phosphoribosylglycinamide formyltransferase (397 aa).

Residues Glu21–Leu22 and Glu81 contribute to the N(1)-(5-phospho-beta-D-ribosyl)glycinamide site. ATP is bound by residues Arg113, Lys154, Glu194 to Val197, and Glu202. The ATP-grasp domain maps to Arg118–Ile312. The Mg(2+) site is built by Glu271 and Glu283. Residues Asp290, Lys361, and Arg368–Arg369 contribute to the N(1)-(5-phospho-beta-D-ribosyl)glycinamide site.

Belongs to the PurK/PurT family. As to quaternary structure, homodimer.

It carries out the reaction N(1)-(5-phospho-beta-D-ribosyl)glycinamide + formate + ATP = N(2)-formyl-N(1)-(5-phospho-beta-D-ribosyl)glycinamide + ADP + phosphate + H(+). It functions in the pathway purine metabolism; IMP biosynthesis via de novo pathway; N(2)-formyl-N(1)-(5-phospho-D-ribosyl)glycinamide from N(1)-(5-phospho-D-ribosyl)glycinamide (formate route): step 1/1. In terms of biological role, involved in the de novo purine biosynthesis. Catalyzes the transfer of formate to 5-phospho-ribosyl-glycinamide (GAR), producing 5-phospho-ribosyl-N-formylglycinamide (FGAR). Formate is provided by PurU via hydrolysis of 10-formyl-tetrahydrofolate. The sequence is that of Formate-dependent phosphoribosylglycinamide formyltransferase from Saccharolobus solfataricus (strain ATCC 35092 / DSM 1617 / JCM 11322 / P2) (Sulfolobus solfataricus).